The following is a 401-amino-acid chain: Imidazolonepropionase (401 aa).

Positions 66 and 68 each coordinate Fe(3+). The Zn(2+) site is built by histidine 66 and histidine 68. The 4-imidazolone-5-propanoate site is built by arginine 75, tyrosine 138, and histidine 171. An N-formimidoyl-L-glutamate-binding site is contributed by tyrosine 138. Histidine 236 contributes to the Fe(3+) binding site. Histidine 236 provides a ligand contact to Zn(2+). Glutamine 239 lines the 4-imidazolone-5-propanoate pocket. Residue aspartate 311 participates in Fe(3+) binding. A Zn(2+)-binding site is contributed by aspartate 311. N-formimidoyl-L-glutamate is bound by residues asparagine 313 and glycine 315. Threonine 316 contributes to the 4-imidazolone-5-propanoate binding site.

Belongs to the metallo-dependent hydrolases superfamily. HutI family. Zn(2+) serves as cofactor. Fe(3+) is required as a cofactor.

The protein resides in the cytoplasm. It carries out the reaction 4-imidazolone-5-propanoate + H2O = N-formimidoyl-L-glutamate. It functions in the pathway amino-acid degradation; L-histidine degradation into L-glutamate; N-formimidoyl-L-glutamate from L-histidine: step 3/3. Its function is as follows. Catalyzes the hydrolytic cleavage of the carbon-nitrogen bond in imidazolone-5-propanoate to yield N-formimidoyl-L-glutamate. It is the third step in the universal histidine degradation pathway. This is Imidazolonepropionase from Acinetobacter baumannii (strain AB0057).